The primary structure comprises 450 residues: Transcription factor SCREAM2 (450 aa).

Disordered regions lie at residues 1 to 47 (MNSD…NQND), 207 to 231 (RQSS…YERE), and 244 to 265 (GLNY…KGMP). Positions 209–220 (SSSSKMCNSESS) are enriched in low complexity. The span at 221 to 230 (SEMRKSSYER) shows a compositional bias: basic and acidic residues. One can recognise a bHLH domain in the interval 263-312 (GMPAKNLMAERRRRKKLNDRLYMLRSVVPKISKMDRASILGDAIDYLKEL). An ACT domain is found at 378 to 450 (NIHMFCGRRP…LDTAGYAGLV (73 aa)).

In terms of assembly, homodimer. Heterodimers with SPCH, MUTE, and FAMA. Expressed constitutively in roots, leaves, stems, and flowers. Broad expression within stomatal cell lineages of leaf epidermis, except in mature guard-cells.

Its subcellular location is the nucleus. Mediates stomatal differentiation in the epidermis probably by controlling successive roles of SPCH, MUTE, and FAMA. Functions as a dimer with SPCH during stomatal initiation. The polypeptide is Transcription factor SCREAM2 (SCRM2) (Arabidopsis thaliana (Mouse-ear cress)).